The chain runs to 433 residues: Ornithine decarboxylase 1B, chloroplastic (433 aa).

Lys96 carries the N6-(pyridoxal phosphate)lysine modification. Pyridoxal 5'-phosphate contacts are provided by residues Ser228, Gly266, and 299 to 302; that span reads EPGR. Substrate is bound at residue 342-343; that stretch reads YD. Residue Cys378 is the Proton donor; shared with dimeric partner of the active site. Position 379 (Asp379) interacts with substrate. Tyr407 is a pyridoxal 5'-phosphate binding site.

This sequence belongs to the Orn/Lys/Arg decarboxylase class-II family. Homodimer. Only the dimer is catalytically active, as the active sites are constructed of residues from both monomers. Requires pyridoxal 5'-phosphate as cofactor.

It is found in the plastid. Its subcellular location is the chloroplast. The catalysed reaction is L-ornithine + H(+) = putrescine + CO2. It participates in alkaloid biosynthesis; nicotine biosynthesis. The protein operates within amine and polyamine biosynthesis; putrescine biosynthesis via L-ornithine pathway; putrescine from L-ornithine: step 1/1. Functionally, involved in the biosynthesis of pyridine alkaloid natural products, leading mainly to the production of anabasine, anatabine, nicotine and nornicotine, effective deterrents against herbivores with antiparasitic and pesticide properties (neurotoxins); nornicotine serves as the precursor in the synthesis of the carcinogen compound N'-nitrosonornicotine (NNN). Catalyzes the first and rate-limiting step of polyamine biosynthesis that converts ornithine into putrescine, which is the precursor for the polyamines, spermidine and spermine. Polyamines are essential for cell proliferation and are implicated in cellular processes, ranging from DNA replication to apoptosis. The polypeptide is Ornithine decarboxylase 1B, chloroplastic (Nicotiana tabacum (Common tobacco)).